The sequence spans 1266 residues: Rho GTPase-activating protein 29 (1266 aa).

A phosphoserine mark is found at Ser166, Ser171, Ser174, and Ser185. The F-BAR domain occupies Ile187 to Glu457. Positions Arg291–Val413 form a coiled coil. Phosphoserine is present on residues Ser496, Ser516, and Ser549. Positions Ser538–Ser556 are enriched in low complexity. The tract at residues Ser538–Gly596 is disordered. The segment at Thr609–Cys654 adopts a Phorbol-ester/DAG-type zinc-finger fold. The Rho-GAP domain occupies Ala668–Phe883. A phosphoserine mark is found at Ser915, Ser951, and Ser1023. Disordered regions lie at residues Ala1033–Lys1054, Val1114–Pro1153, and Val1222–Arg1248. Positions Ser1115 to Ala1127 are enriched in polar residues. Residues Ala1132–Ser1148 are compositionally biased toward basic and acidic residues. Ser1149 and Ser1151 each carry phosphoserine. The interval Pro1263–Val1266 is interaction with PTPN13/PTPL1.

As to quaternary structure, interacts with PTPN13/PTPL1. Interacts with RAP2A via its coiled coil domain. Interacts with RASIP1.

In terms of biological role, GTPase activator for the Rho-type GTPases by converting them to an inactive GDP-bound state. Has strong activity toward RHOA, and weaker activity toward RAC1 and CDC42. May act as a specific effector of RAP2A to regulate Rho. In concert with RASIP1, suppresses RhoA signaling and dampens ROCK and MYH9 activities in endothelial cells and plays an essential role in blood vessel tubulogenesis. The polypeptide is Rho GTPase-activating protein 29 (Arhgap29) (Rattus norvegicus (Rat)).